A 335-amino-acid polypeptide reads, in one-letter code: Dehydration-responsive element-binding protein 2A (335 aa).

2 disordered regions span residues 1-32 (MAVY…GTTV) and 50-74 (STKK…GPEN). The Nuclear localization signal signature appears at 19 to 55 (RKRKSRSRGDGTTVAERLKRWKEYNETVEEVSTKKRK). Positions 52–66 (KKRKVPAKGSKKGCM) are enriched in basic residues. A DNA-binding region (AP2/ERF) is located at residues 78–135 (SFRGVRQRIWGKWVAEIREPNRGSRLWLGTFPTAQEAASAYDEAAKAMYGPLARLNFP). The segment at 279–304 (QDRYPGNSVANGSYRPESQQSGFDPL) is disordered. Polar residues predominate over residues 286-304 (SVANGSYRPESQQSGFDPL).

It belongs to the AP2/ERF transcription factor family. ERF subfamily. Interacts with MED25. Binds to DPB3-1 in the nucleus during heat-stress. In terms of processing, ubiquitinated by DRIP1 and DRIP2. Ubiquitination probably leads to its subsequent degradation, thus negatively regulating response to drought. Expressed preferentially in roots and stems, and at a lower level in leaves.

The protein localises to the nucleus. Functionally, transcriptional activator that binds specifically to the DNA sequence 5'-[AG]CCGAC-3'. Binding to the C-repeat/DRE element mediates high salinity- and dehydration-inducible transcription. Promotes the expression of heat stress-inducible genes by contributing to the formation of a heat stress-specific transcriptional complex with NF-Y subunits (e.g. DPB3-1, NF-YA2 and NF-YB3) at the promoter of target genes, thus promoting heat tolerance. The chain is Dehydration-responsive element-binding protein 2A from Arabidopsis thaliana (Mouse-ear cress).